Reading from the N-terminus, the 99-residue chain is Ubiquitin-related modifier 1 homolog (99 aa).

At Gly-99 the chain carries 1-thioglycine. Gly-99 participates in a covalent cross-link: Glycyl lysine isopeptide (Gly-Lys) (interchain with K-? in acceptor proteins).

This sequence belongs to the URM1 family. In terms of assembly, interacts with cer. Post-translationally, C-terminal thiocarboxylation occurs in 2 steps, it is first acyl-adenylated (-COAMP) via the hesA/moeB/thiF part of the MOCS3 homolog, then thiocarboxylated (-COSH) via the rhodanese domain of the MOCS3 homolog.

Its subcellular location is the cytoplasm. Its pathway is tRNA modification; 5-methoxycarbonylmethyl-2-thiouridine-tRNA biosynthesis. Functionally, acts as a sulfur carrier required for 2-thiolation of mcm(5)S(2)U at tRNA wobble positions of cytosolic tRNA(Lys), tRNA(Glu) and tRNA(Gln). Serves as sulfur donor in tRNA 2-thiolation reaction by being thiocarboxylated (-COSH) at its C-terminus by MOCS3. The sulfur is then transferred to tRNA to form 2-thiolation of mcm(5)S(2)U. Also acts as a ubiquitin-like protein (UBL) that is covalently conjugated via an isopeptide bond to lysine residues of target proteins such as Prx2/Jafrac1, Ciao1, Eip71CD and GILT1. The thiocarboxylated form serves as substrate for conjugation and oxidative stress specifically induces the formation of UBL-protein conjugates. In Drosophila persimilis (Fruit fly), this protein is Ubiquitin-related modifier 1 homolog.